The sequence spans 81 residues: Conotoxin Im6.1 (81 aa).

An N-terminal signal peptide occupies residues 1 to 20 (MSKLGVVLFTLLLLVPLVTP). A propeptide spanning residues 21–47 (ERDGGKWTMLAKNKKAMKRNLMDFITR) is cleaved from the precursor. 3 cysteine pairs are disulfide-bonded: Cys-49/Cys-61, Cys-54/Cys-67, and Cys-60/Cys-76.

This sequence belongs to the conotoxin M superfamily. Expressed by the venom duct.

Its subcellular location is the secreted. This is Conotoxin Im6.1 from Conus imperialis (Imperial cone).